Here is a 142-residue protein sequence, read N- to C-terminus: Large ribosomal subunit protein uL22c (142 aa).

This sequence belongs to the universal ribosomal protein uL22 family. In terms of assembly, part of the 50S ribosomal subunit.

The protein resides in the plastid. The protein localises to the chloroplast. This protein binds specifically to 23S rRNA. Functionally, the globular domain of the protein is located near the polypeptide exit tunnel on the outside of the subunit, while an extended beta-hairpin is found that lines the wall of the exit tunnel in the center of the 70S ribosome. The protein is Large ribosomal subunit protein uL22c (rpl22) of Picea abies (Norway spruce).